The primary structure comprises 627 residues: MASPPHLPLLLLLLVVVCNAAGGDGARVNPFTAKAAFIRYWNRRVPNNRPHPAFFVAKLSPLQAADAASFAAALPRLLPPLCARAALLCPSASDTETAASLAVGGGGGGGPFKGYSNANFTNYGSGGVGGADGFSAYSPDLNVVGDSFRRYGRDSTRRVDTFASYEAEGNVVTANFTSYAGAATGGSGSFSAYAADTNVPDSTFTNYDAEANGRRREFTSYSQEANHGSNTFAGYGKNGNGLRETFTTYGNDSNVIASGFTNYGESGNGATDTFTAYGKEGNVPDNTFRSYGAGGNAGVDTFKGYRSESNVGDDSFASYAKGANGNAAEFQNYGGSFNPGTVTFKGYGEGSNPNHHIGFKEYAGSNNSFKGYAKSGVDFKEYHNTSSADAATTMSLEAVSSGHQHLKWSPEPGKFFRETELVSGNTMPMPDIKDKMPPRAFLPRDIAKKIPFKPNAVSEVFGVPLDTAMGKAVTSTVAECERAPSRGETKRCATSAEDIVDFAVEMLGNDIVVRSTASTAGSGGQIRLGNVTGVDGGKVTRSVSCHQSLFPYLVYYCHSVPKVRVYEADIMAADSDQKINHGVAICHLDTSDWSPTHGAFIALGGKPGEVEVCHWIFEGDMTWTVAD.

Positions 1-25 (MASPPHLPLLLLLLVVVCNAAGGDG) are cleaved as a signal peptide. 6 N-linked (GlcNAc...) asparagine glycosylation sites follow: asparagine 119, asparagine 175, asparagine 251, asparagine 366, asparagine 384, and asparagine 530. The BURP domain occupies 415–626 (FFRETELVSG…FEGDMTWTVA (212 aa)).

In terms of tissue distribution, expressed in stems, leaves, shoot and panicles.

This is BURP domain-containing protein 12 (BURP12) from Oryza sativa subsp. japonica (Rice).